Here is a 274-residue protein sequence, read N- to C-terminus: ATP synthase subunit delta (274 aa).

This sequence belongs to the ATPase delta chain family. As to quaternary structure, F-type ATPases have 2 components, F(1) - the catalytic core - and F(0) - the membrane proton channel. F(1) has five subunits: alpha(3), beta(3), gamma(1), delta(1), epsilon(1). F(0) has three main subunits: a(1), b(2) and c(10-14). The alpha and beta chains form an alternating ring which encloses part of the gamma chain. F(1) is attached to F(0) by a central stalk formed by the gamma and epsilon chains, while a peripheral stalk is formed by the delta and b chains.

The protein resides in the cell membrane. Functionally, f(1)F(0) ATP synthase produces ATP from ADP in the presence of a proton or sodium gradient. F-type ATPases consist of two structural domains, F(1) containing the extramembraneous catalytic core and F(0) containing the membrane proton channel, linked together by a central stalk and a peripheral stalk. During catalysis, ATP synthesis in the catalytic domain of F(1) is coupled via a rotary mechanism of the central stalk subunits to proton translocation. In terms of biological role, this protein is part of the stalk that links CF(0) to CF(1). It either transmits conformational changes from CF(0) to CF(1) or is implicated in proton conduction. In Corynebacterium efficiens (strain DSM 44549 / YS-314 / AJ 12310 / JCM 11189 / NBRC 100395), this protein is ATP synthase subunit delta.